A 260-amino-acid chain; its full sequence is Carbonic anhydrase 2 (260 aa).

Position 2 is an N-acetylserine (serine 2). Serine 2 carries the post-translational modification Phosphoserine. In terms of domain architecture, Alpha-carbonic anhydrase spans 3–259 (HHWGYSKSNG…LKNRKIKASF (257 aa)). Residues 16–39 (WHKEFPIANGDRQSPVDIDTGTAQ) form a disordered region. Histidine 64 serves as the catalytic Proton donor/acceptor. Serine 87 carries the phosphoserine modification. Histidine 94, histidine 96, and histidine 119 together coordinate Zn(2+). At serine 165 the chain carries Phosphoserine. 198-199 (TT) contributes to the substrate binding site. Serine 232 bears the Phosphoserine mark.

It belongs to the alpha-carbonic anhydrase family. As to quaternary structure, interacts with SLC4A4 and SLC26A6. Interaction with SLC4A7 regulates SLC4A7 transporter activity. The cofactor is Zn(2+).

The protein resides in the cytoplasm. The protein localises to the cell membrane. The enzyme catalyses hydrogencarbonate + H(+) = CO2 + H2O. It carries out the reaction urea = cyanamide + H2O. Its activity is regulated as follows. Inhibited by acetazolamide. Catalyzes the reversible hydration of carbon dioxide. Can also hydrate cyanamide to urea. Involved in the regulation of fluid secretion into the anterior chamber of the eye. Essential for bone resorption and osteoclast differentiation. Contributes to intracellular pH regulation in the duodenal upper villous epithelium during proton-coupled peptide absorption. Stimulates the chloride-bicarbonate exchange activity of SLC26A6. The chain is Carbonic anhydrase 2 (Ca2) from Rattus norvegicus (Rat).